Consider the following 228-residue polypeptide: Peptide deformylase (228 aa).

2 disordered regions span residues 1-28 and 116-138; these read MSQD…EGAV and GVPK…EPDR. Polar residues-rich tracts occupy residues 8–18 and 123–133; these read TGCNTHSNTHS and NKQQANNSTSC. Residues cysteine 141 and histidine 183 each coordinate Fe cation. Residue glutamate 184 is part of the active site. Residue histidine 187 coordinates Fe cation.

The protein belongs to the polypeptide deformylase family. The cofactor is Fe(2+).

The enzyme catalyses N-terminal N-formyl-L-methionyl-[peptide] + H2O = N-terminal L-methionyl-[peptide] + formate. Functionally, removes the formyl group from the N-terminal Met of newly synthesized proteins. Requires at least a dipeptide for an efficient rate of reaction. N-terminal L-methionine is a prerequisite for activity but the enzyme has broad specificity at other positions. The protein is Peptide deformylase of Tropheryma whipplei (strain Twist) (Whipple's bacillus).